Consider the following 216-residue polypeptide: Trimethylamine corrinoid protein 1 (216 aa).

The B12-binding N-terminal domain maps to 1–92 (MASKEEIIAK…EMEKRKSETK (92 aa)). The B12-binding domain occupies 94–216 (LGTVVIGTIE…VVSKVRAVLL (123 aa)). His107 lines the methylcob(III)alamin pocket.

This sequence belongs to the methylamine corrinoid protein family. In terms of assembly, can form a complex with MttB.

It participates in one-carbon metabolism; methanogenesis from trimethylamine. Acts probably as a methyl group carrier between MttB and either MtbA or MtaA. The chain is Trimethylamine corrinoid protein 1 (mttC1) from Methanosarcina acetivorans (strain ATCC 35395 / DSM 2834 / JCM 12185 / C2A).